We begin with the raw amino-acid sequence, 303 residues long: tRNA dimethylallyltransferase (303 aa).

9 to 16 lines the ATP pocket; it reads GPTASGKS. 11-16 contributes to the substrate binding site; that stretch reads TASGKS. The tract at residues 34–37 is interaction with substrate tRNA; sequence DSKQ.

The protein belongs to the IPP transferase family. Monomer. Mg(2+) serves as cofactor.

The catalysed reaction is adenosine(37) in tRNA + dimethylallyl diphosphate = N(6)-dimethylallyladenosine(37) in tRNA + diphosphate. Its function is as follows. Catalyzes the transfer of a dimethylallyl group onto the adenine at position 37 in tRNAs that read codons beginning with uridine, leading to the formation of N6-(dimethylallyl)adenosine (i(6)A). This Ehrlichia chaffeensis (strain ATCC CRL-10679 / Arkansas) protein is tRNA dimethylallyltransferase.